Reading from the N-terminus, the 608-residue chain is 65-kDa microtubule-associated protein 6 (608 aa).

Coiled coils occupy residues 164–186 (DLTLRNLNEYQTHLRTLQKEKSD), 368–388 (ELLANIEMQINKIKDEAQSRK), and 467–503 (VRLVNILEDYKLTRKQQEEEKKRYRDQKKRQDLLLTQ). A disordered region spans residues 501–565 (LTQRESIYGS…RSYSGHHRQN (65 aa)). Over residues 510-523 (SKPSPRRSSSFRKP) the composition is skewed to low complexity. Ser-513 carries the post-translational modification Phosphoserine. Residues 526–535 (FNISNGNGSV) show a composition bias toward polar residues. Residue Ser-604 is modified to Phosphoserine.

This sequence belongs to the MAP65/ASE1 family. As to quaternary structure, forms a dimer. Binds to polymerized centrally located endocytic MT.

The protein localises to the nucleus. It localises to the cytoplasm. It is found in the mitochondrion. The protein resides in the cytoskeleton. Its subcellular location is the phragmoplast. Its function is as follows. Microtubule-associated protein that mediates the formation of a mesh-like stable and dense network formed by individual microtubules (MT). Confers MT resistance to high concentration of NaCl. This Arabidopsis thaliana (Mouse-ear cress) protein is 65-kDa microtubule-associated protein 6 (MAP65-6).